A 557-amino-acid polypeptide reads, in one-letter code: Urocanate hydratase (557 aa).

A disordered region spans residues 1 to 20 (MSNPRHNEREVRSPRGDELN). NAD(+)-binding positions include 52-53 (GG), Gln130, 176-178 (GMG), Glu196, Arg201, 242-243 (NA), 263-267 (QTSAH), 273-274 (YL), and Tyr322. Residue Cys410 is part of the active site. NAD(+) is bound at residue Gly492.

This sequence belongs to the urocanase family. NAD(+) is required as a cofactor.

Its subcellular location is the cytoplasm. The enzyme catalyses 4-imidazolone-5-propanoate = trans-urocanate + H2O. Its pathway is amino-acid degradation; L-histidine degradation into L-glutamate; N-formimidoyl-L-glutamate from L-histidine: step 2/3. In terms of biological role, catalyzes the conversion of urocanate to 4-imidazolone-5-propionate. This Brucella canis (strain ATCC 23365 / NCTC 10854 / RM-666) protein is Urocanate hydratase.